Consider the following 608-residue polypeptide: Elongation factor 4 (608 aa).

In terms of domain architecture, tr-type G spans 11–193; the sequence is SKIRNFSIIA…QIVEKVPAPD (183 aa). GTP contacts are provided by residues 23–28 and 140–143; these read DHGKST and NKID.

It belongs to the TRAFAC class translation factor GTPase superfamily. Classic translation factor GTPase family. LepA subfamily.

The protein resides in the cell membrane. It carries out the reaction GTP + H2O = GDP + phosphate + H(+). Its function is as follows. Required for accurate and efficient protein synthesis under certain stress conditions. May act as a fidelity factor of the translation reaction, by catalyzing a one-codon backward translocation of tRNAs on improperly translocated ribosomes. Back-translocation proceeds from a post-translocation (POST) complex to a pre-translocation (PRE) complex, thus giving elongation factor G a second chance to translocate the tRNAs correctly. Binds to ribosomes in a GTP-dependent manner. In Bacillus cytotoxicus (strain DSM 22905 / CIP 110041 / 391-98 / NVH 391-98), this protein is Elongation factor 4.